Reading from the N-terminus, the 202-residue chain is dITP/XTP pyrophosphatase (202 aa).

10–15 (TGNAGK) contributes to the substrate binding site. Mg(2+)-binding residues include D46 and D75. The active-site Proton acceptor is D75. Substrate contacts are provided by residues S76, 160–163 (FGYD), K183, and 188–189 (HR).

It belongs to the HAM1 NTPase family. In terms of assembly, homodimer. Mg(2+) serves as cofactor.

It catalyses the reaction XTP + H2O = XMP + diphosphate + H(+). The enzyme catalyses dITP + H2O = dIMP + diphosphate + H(+). It carries out the reaction ITP + H2O = IMP + diphosphate + H(+). Its function is as follows. Pyrophosphatase that catalyzes the hydrolysis of nucleoside triphosphates to their monophosphate derivatives, with a high preference for the non-canonical purine nucleotides XTP (xanthosine triphosphate), dITP (deoxyinosine triphosphate) and ITP. Seems to function as a house-cleaning enzyme that removes non-canonical purine nucleotides from the nucleotide pool, thus preventing their incorporation into DNA/RNA and avoiding chromosomal lesions. The chain is dITP/XTP pyrophosphatase from Idiomarina loihiensis (strain ATCC BAA-735 / DSM 15497 / L2-TR).